A 568-amino-acid chain; its full sequence is Sphingosine-1-phosphate lyase 1 (568 aa).

Residues M1–Q41 are Lumenal-facing. The helical; Signal-anchor for type III membrane protein transmembrane segment at L42–Q62 threads the bilayer. The Cytoplasmic portion of the chain corresponds to P63–H568. An N6-(pyridoxal phosphate)lysine; alternate modification is found at K353. K353 is subject to N6-acetyllysine; alternate. 3'-nitrotyrosine occurs at positions 356 and 366. S564 carries the phosphoserine modification.

Belongs to the group II decarboxylase family. Sphingosine-1-phosphate lyase subfamily. In terms of assembly, homodimer. The cofactor is pyridoxal 5'-phosphate.

The protein localises to the endoplasmic reticulum membrane. The catalysed reaction is sphinganine 1-phosphate = hexadecanal + phosphoethanolamine. The enzyme catalyses sphing-4-enine 1-phosphate = (2E)-hexadecenal + phosphoethanolamine. It participates in lipid metabolism; sphingolipid metabolism. Cleaves phosphorylated sphingoid bases (PSBs), such as sphingosine-1-phosphate, into fatty aldehydes and phosphoethanolamine. Elevates stress-induced ceramide production and apoptosis. Required for global lipid homeostasis in liver and cholesterol homeostasis in fibroblasts. Involved in the regulation of pro-inflammatory response and neutrophil trafficking. Modulates neuronal autophagy via phosphoethanolamine production which regulates accumulation of aggregate-prone proteins such as APP. Seems to play a role in establishing neuronal contact sites and axonal maintenance. In Pongo abelii (Sumatran orangutan), this protein is Sphingosine-1-phosphate lyase 1.